Here is a 243-residue protein sequence, read N- to C-terminus: Type III pantothenate kinase (243 aa).

Position 7–14 (7–14 (DLGNSRFK)) interacts with ATP. Substrate is bound by residues Tyr-91 and 98-101 (GVDR). Asp-100 (proton acceptor) is an active-site residue. Thr-122 is an ATP binding site. Residue Thr-172 participates in substrate binding.

This sequence belongs to the type III pantothenate kinase family. In terms of assembly, homodimer. NH4(+) serves as cofactor. Requires K(+) as cofactor.

The protein resides in the cytoplasm. The enzyme catalyses (R)-pantothenate + ATP = (R)-4'-phosphopantothenate + ADP + H(+). Its pathway is cofactor biosynthesis; coenzyme A biosynthesis; CoA from (R)-pantothenate: step 1/5. Functionally, catalyzes the phosphorylation of pantothenate (Pan), the first step in CoA biosynthesis. This chain is Type III pantothenate kinase, found in Stenotrophomonas maltophilia (strain K279a).